A 271-amino-acid polypeptide reads, in one-letter code: Putative pirin-like protein At3g59260 (271 aa).

The protein belongs to the pirin family.

The protein localises to the nucleus. This chain is Putative pirin-like protein At3g59260, found in Arabidopsis thaliana (Mouse-ear cress).